The primary structure comprises 675 residues: MPDREKAHARIEALREEIRHHNYLYYVLDRPEISDEAYDGLFRELVRLEESYPALITPDSPTQRVGAAPAEKFLPFPHTIPMLSLENAMSEAEVFEFARRVRKILGDRGDVDFMAEPKMDGLAVELVYENGELTGAGTRGDGYVGEDVTRNAKTIRAIPLKLYAGAGGASPPARIAVRGEVYMDRKDFAALNRSREQAGEPLFANPRNAAAGSLRQLDPSVTAARSLKAFFYGVGEVSGYRFKTQAQTLEQLRRWGLPVNPLSRVCPSIEDAVSFYNEIAAGRDALPFEIDGVVVKVNSIEWQEMLGEKSRSPRWAIAYKFSPHQARTRVLDIKVQVGRTGVLTPVAELEPVTVGGVTVRRATLHNQDEVERKDIRVRDQVMVRRAGDVIPEVVEVIGEARTGGEEVFQMPGQCPSCGSEVVRLPEEAVHRCLNRNCPAQIKASLRHFASRDAMNIEGLGKNIVSMLVDRGIVESVSDLYRLSVETLEQLPGFAGKSSRNLVESIERSKKTNLADFLYALGIYHVGSHVARLLAERFGTLDAVRRASVEELMSVNGVGEVVARSVVHYFSLPANRTLVESLLSAGLEMAATEPEAGPVDAFWNGKTVVFTGALSSMTRSNAAALTASRGARVSDSVSRKTDIVVAGADPGSKVEKARQLGITILDEREFLERLGM.

NAD(+)-binding positions include 35-39 (DEAYD), 84-85 (SL), and glutamate 116. Catalysis depends on lysine 118, which acts as the N6-AMP-lysine intermediate. NAD(+) is bound by residues arginine 139, glutamate 180, lysine 296, and lysine 320. Zn(2+) is bound by residues cysteine 414, cysteine 417, cysteine 432, and cysteine 437. A BRCT domain is found at 597-675 (PVDAFWNGKT…EREFLERLGM (79 aa)).

It belongs to the NAD-dependent DNA ligase family. LigA subfamily. It depends on Mg(2+) as a cofactor. Mn(2+) serves as cofactor.

The enzyme catalyses NAD(+) + (deoxyribonucleotide)n-3'-hydroxyl + 5'-phospho-(deoxyribonucleotide)m = (deoxyribonucleotide)n+m + AMP + beta-nicotinamide D-nucleotide.. In terms of biological role, DNA ligase that catalyzes the formation of phosphodiester linkages between 5'-phosphoryl and 3'-hydroxyl groups in double-stranded DNA using NAD as a coenzyme and as the energy source for the reaction. It is essential for DNA replication and repair of damaged DNA. The chain is DNA ligase from Syntrophobacter fumaroxidans (strain DSM 10017 / MPOB).